The following is a 1003-amino-acid chain: Glycine--tRNA ligase (1003 aa).

Residues 1–310 (MSSQPLTLQA…VTPKKIPTIC (310 aa)) form a glycine--tRNA ligase alpha subunit region. Positions 311–1003 (QPEDFLLEIG…CFGFYAWDVL (693 aa)) are glycine--tRNA ligase beta subunit.

The protein belongs to the class-II aminoacyl-tRNA synthetase family.

The protein resides in the cytoplasm. It catalyses the reaction tRNA(Gly) + glycine + ATP = glycyl-tRNA(Gly) + AMP + diphosphate. The protein is Glycine--tRNA ligase (glyQS) of Chlamydia trachomatis serovar L2 (strain ATCC VR-902B / DSM 19102 / 434/Bu).